A 120-amino-acid polypeptide reads, in one-letter code: Spermidine export protein MdtJ (120 aa).

Transmembrane regions (helical) follow at residues 1–21, 31–51, 54–74, and 81–101; these read MFYW…TLSM, AGFI…SFAV, IALG…ITIF, and EALS…IVLI.

This sequence belongs to the drug/metabolite transporter (DMT) superfamily. Small multidrug resistance (SMR) (TC 2.A.7.1) family. MdtJ subfamily. Forms a complex with MdtI.

Its subcellular location is the cell inner membrane. Catalyzes the excretion of spermidine. This Salmonella paratyphi A (strain ATCC 9150 / SARB42) protein is Spermidine export protein MdtJ.